The chain runs to 113 residues: Beta-microseminoprotein (113 aa).

Residues 1–20 (MKARLGSLLVLATLVTASNA) form the signal peptide. Disulfide bonds link Cys22–Cys69, Cys38–Cys61, Cys56–Cys92, Cys59–Cys68, and Cys83–Cys106.

The protein belongs to the beta-microseminoprotein family. Homodimer; Interacts with PI16.

The protein resides in the secreted. The polypeptide is Beta-microseminoprotein (Msmb) (Rattus norvegicus (Rat)).